A 151-amino-acid chain; its full sequence is Ribosome maturation factor RimP (151 aa).

The protein belongs to the RimP family.

It is found in the cytoplasm. In terms of biological role, required for maturation of 30S ribosomal subunits. In Colwellia psychrerythraea (strain 34H / ATCC BAA-681) (Vibrio psychroerythus), this protein is Ribosome maturation factor RimP.